A 165-amino-acid chain; its full sequence is Protein SprT (165 aa).

The SprT-like domain maps to 10–158 (EACYRQAEHF…CRRCKATLVF (149 aa)). His69 serves as a coordination point for Zn(2+). Residue Glu70 is part of the active site. His73 is a Zn(2+) binding site.

The protein belongs to the SprT family. The cofactor is Zn(2+).

It localises to the cytoplasm. The polypeptide is Protein SprT (Pseudomonas aeruginosa (strain LESB58)).